The following is a 76-amino-acid chain: MITKAVFALFFPFMLVVLFTRVTFNHYVAIALTAALLFASYLKGYTETYFIVGLDVVSLVAGGLYMAKKAAEKKEE.

Over 1–5 (MITKA) the chain is Extracellular. The helical transmembrane segment at 6-22 (VFALFFPFMLVVLFTRV) threads the bilayer. Over 23–27 (TFNHY) the chain is Cytoplasmic. Residues 28 to 44 (VAIALTAALLFASYLKG) traverse the membrane as a helical segment. Over 45-49 (YTETY) the chain is Extracellular. The chain crosses the membrane as a helical span at residues 50 to 66 (FIVGLDVVSLVAGGLYM). The Cytoplasmic portion of the chain corresponds to 67-76 (AKKAAEKKEE).

The protein resides in the cell membrane. The sequence is that of Protein CsbA (csbA) from Bacillus subtilis (strain 168).